An 822-amino-acid polypeptide reads, in one-letter code: Putative endoplasmic reticulum metallopeptidase 1 (822 aa).

Residues 1 to 14 (MVLVCASSSKCKRN) lie on the Cytoplasmic side of the membrane. Residues 15-35 (TFLQLAMVLFAVVMARIALYF) traverse the membrane as a helical segment. At 36–365 (HNHLDEPLVD…FNSLFFMYSK (330 aa)) the chain is on the lumenal side. N-linked (GlcNAc...) asparagine glycosylation is present at asparagine 146. Positions 161 and 173 each coordinate Zn(2+). Glutamate 207 serves as the catalytic Proton acceptor. Zn(2+) contacts are provided by glutamate 208 and glutamate 234. Asparagine 291 carries N-linked (GlcNAc...) asparagine glycosylation. Residue histidine 307 participates in Zn(2+) binding. The helical transmembrane segment at 366–384 (LTSKILNTLVGGLGILLTL) threads the bilayer. Topologically, residues 385–392 (RGSEGSFT) are cytoplasmic. The chain crosses the membrane as a helical span at residues 393–413 (VALIAQVISIAGIFVIPNIWA). Topologically, residues 414 to 431 (YILGNVLDCGMSWFRNEY) are lumenal. A helical transmembrane segment spans residues 432 to 452 (WPLFIYLPAIFASLFFTESLF). Topologically, residues 453 to 463 (KRSEHLALRAT) are cytoplasmic. A helical membrane pass occupies residues 464–484 (IFIFSLLTFIPLPSAYLFTII). Aspartate 485 is a topological domain (lumenal). Residues 486–506 (FFMVFALFLNDKILAKPGTVH) traverse the membrane as a helical segment. At 507-514 (PLTYFIGS) the chain is on the cytoplasmic side. Residues 515 to 535 (IGAMTVGFESAINLLEIFVPL) traverse the membrane as a helical segment. At 536-547 (TGRIGTDKVADN) the chain is on the lumenal side. A helical membrane pass occupies residues 548–568 (VVATVCVCGFNIYFPLMSPWI). Residues 569 to 575 (QRFRSRC) lie on the Cytoplasmic side of the membrane. A helical transmembrane segment spans residues 576-596 (CFRLGLLFSIFVVGFSSFILA). At 597-822 (KQDTYYDSLH…GVVSGNFKLE (226 aa)) the chain is on the lumenal side. Asparagine 617, asparagine 682, asparagine 706, and asparagine 758 each carry an N-linked (GlcNAc...) asparagine glycan.

This sequence belongs to the peptidase M28 family. M28B subfamily. Requires Zn(2+) as cofactor.

It localises to the endoplasmic reticulum membrane. The chain is Putative endoplasmic reticulum metallopeptidase 1 from Schizosaccharomyces pombe (strain 972 / ATCC 24843) (Fission yeast).